The following is a 327-amino-acid chain: BarH-like 1 homeobox protein (327 aa).

Disordered regions lie at residues 1 to 90, 112 to 184, and 305 to 327; these read MEGS…AQSR, APYS…ARTA, and GASE…AQPR. The segment covering 33–54 has biased composition (low complexity); the sequence is RSPLELSPRSESSSDCSSPASP. Residues 79 to 90 show a composition bias toward polar residues; the sequence is QPGQLSAPAQSR. 2 stretches are compositionally biased toward basic and acidic residues: residues 133 to 143 and 152 to 166; these read AAEDFRDKLDK and SEYK…EISS. The homeobox DNA-binding region spans 178–237; sequence PRKARTAFTDHQLAQLERSFERQKYLSVQDRMELAASLNLTDTQVKTWYQNRRTKWKRQT. Positions 316 to 327 are enriched in low complexity; the sequence is LAGVLPRAAQPR.

This sequence belongs to the BAR homeobox family.

It localises to the nucleus. The sequence is that of BarH-like 1 homeobox protein (BARHL1) from Homo sapiens (Human).